An 88-amino-acid chain; its full sequence is Small ribosomal subunit protein bS20 (88 aa).

It belongs to the bacterial ribosomal protein bS20 family.

Functionally, binds directly to 16S ribosomal RNA. This chain is Small ribosomal subunit protein bS20, found in Methylorubrum populi (strain ATCC BAA-705 / NCIMB 13946 / BJ001) (Methylobacterium populi).